We begin with the raw amino-acid sequence, 614 residues long: Chaperone protein DnaK (614 aa).

The residue at position 174 (Thr-174) is a Phosphothreonine; by autocatalysis. A disordered region spans residues 576-614 (QTGGAAPGPDMGADPGAGGAQGDDNVVDAEYTEVDKDQK). Positions 578–589 (GGAAPGPDMGAD) are enriched in low complexity.

The protein belongs to the heat shock protein 70 family.

Acts as a chaperone. This is Chaperone protein DnaK from Desulfitobacterium hafniense (strain DSM 10664 / DCB-2).